A 388-amino-acid polypeptide reads, in one-letter code: MGNLTSAQPAGCKIVETLPATLPLALPAGSMLTYDCFDTLISQTQSELCIASYCCNLRSTPEGGHVLLRLLELARANVRVTIIVDEQSRDADATQLAGVPNLRYLKMDVGELPGGKPGSLLSSFWVSDKRRFYLGSASLTGGSISTIKSLGVYSECAPLARDLRRRFRDYERLCARRCLRCLSLSTRFHLRRRCGDAFFSDAPESLIGSTRTFDADAVLAHVQAARSTIDMELLSLVPLVRDEDSVKYWPRMHDALVRAALERNVRLRLLVGLWHRSDVFSLAAVKGLHELGVGHADISVRVFAIPGAKGDAINNTKLLVVDDEYVHVSNADIDGTHYARHAFVSFNCAERTFARALGALFERDWQSSFSSPLPRALPPEPATLLSVN.

A lipid anchor (N-myristoyl glycine; by host) is attached at Gly-2. Positions Gly-310 to His-337 constitute a PLD phosphodiesterase domain.

It is found in the virion membrane. The protein resides in the host endoplasmic reticulum membrane. Functionally, envelope protein associated with the inner side of the enveloped virion (EV) membrane. This Molluscum contagiosum virus subtype 2 (MOCV) protein is Envelope protein F13 homolog (P43K).